Consider the following 492-residue polypeptide: Cobyric acid synthase (492 aa).

The 189-residue stretch at 252–440 (QLNVVVPVLT…LHGIFEQTEA (189 aa)) folds into the GATase cobBQ-type domain. Cys-333 acts as the Nucleophile in catalysis. His-432 is an active-site residue.

It belongs to the CobB/CobQ family. CobQ subfamily.

The protein operates within cofactor biosynthesis; adenosylcobalamin biosynthesis. Catalyzes amidations at positions B, D, E, and G on adenosylcobyrinic A,C-diamide. NH(2) groups are provided by glutamine, and one molecule of ATP is hydrogenolyzed for each amidation. In Photobacterium profundum (strain SS9), this protein is Cobyric acid synthase.